The following is a 485-amino-acid chain: Glutamate--tRNA ligase 1 (485 aa).

The 'HIGH' region signature appears at 9–19; sequence PSPTGHLHIGG. Residues 250-254 carry the 'KMSKS' region motif; the sequence is KMSKR. ATP is bound at residue K253.

It belongs to the class-I aminoacyl-tRNA synthetase family. Glutamate--tRNA ligase type 1 subfamily. In terms of assembly, monomer.

It localises to the cytoplasm. The enzyme catalyses tRNA(Glu) + L-glutamate + ATP = L-glutamyl-tRNA(Glu) + AMP + diphosphate. Catalyzes the attachment of glutamate to tRNA(Glu) in a two-step reaction: glutamate is first activated by ATP to form Glu-AMP and then transferred to the acceptor end of tRNA(Glu). This is Glutamate--tRNA ligase 1 from Caldicellulosiruptor saccharolyticus (strain ATCC 43494 / DSM 8903 / Tp8T 6331).